The chain runs to 197 residues: Endo-1,4-beta-xylanase A (197 aa).

One can recognise a GH11 domain in the interval 1–197; the sequence is SGTPSSTGTD…SSGTATITVT (197 aa). E87 (nucleophile) is an active-site residue. A disulfide bridge links C111 with C160. E184 serves as the catalytic Proton donor.

It belongs to the glycosyl hydrolase 11 (cellulase G) family.

It is found in the secreted. It carries out the reaction Endohydrolysis of (1-&gt;4)-beta-D-xylosidic linkages in xylans.. It participates in glycan degradation; xylan degradation. Hydrolyzes xylans into xylobiose and xylose. This is Endo-1,4-beta-xylanase A (XYNA) from Schizophyllum commune (Split gill fungus).